The following is a 97-amino-acid chain: Translation initiation factor 1A (97 aa).

The S1-like domain maps to 8-82; the sequence is IRVRLPDRKK…DRADIVWRYT (75 aa).

This sequence belongs to the eIF-1A family.

Seems to be required for maximal rate of protein biosynthesis. Enhances ribosome dissociation into subunits and stabilizes the binding of the initiator Met-tRNA(I) to 40 S ribosomal subunits. The protein is Translation initiation factor 1A (eIF1A) of Archaeoglobus fulgidus (strain ATCC 49558 / DSM 4304 / JCM 9628 / NBRC 100126 / VC-16).